The primary structure comprises 152 residues: 2-C-methyl-D-erythritol 2,4-cyclodiphosphate synthase (152 aa).

The a divalent metal cation site is built by aspartate 8 and histidine 10. 4-CDP-2-C-methyl-D-erythritol 2-phosphate-binding positions include 8–10 and 34–35; these read DSH and HS. Residue histidine 42 participates in a divalent metal cation binding. 4-CDP-2-C-methyl-D-erythritol 2-phosphate-binding positions include 56-58 and 61-65; these read DIG and FPDTD.

It belongs to the IspF family. Homotrimer. A divalent metal cation is required as a cofactor.

It catalyses the reaction 4-CDP-2-C-methyl-D-erythritol 2-phosphate = 2-C-methyl-D-erythritol 2,4-cyclic diphosphate + CMP. It functions in the pathway isoprenoid biosynthesis; isopentenyl diphosphate biosynthesis via DXP pathway; isopentenyl diphosphate from 1-deoxy-D-xylulose 5-phosphate: step 4/6. Its function is as follows. Involved in the biosynthesis of isopentenyl diphosphate (IPP) and dimethylallyl diphosphate (DMAPP), two major building blocks of isoprenoid compounds. Catalyzes the conversion of 4-diphosphocytidyl-2-C-methyl-D-erythritol 2-phosphate (CDP-ME2P) to 2-C-methyl-D-erythritol 2,4-cyclodiphosphate (ME-CPP) with a corresponding release of cytidine 5-monophosphate (CMP). The sequence is that of 2-C-methyl-D-erythritol 2,4-cyclodiphosphate synthase from Thermus thermophilus (strain ATCC BAA-163 / DSM 7039 / HB27).